Here is a 431-residue protein sequence, read N- to C-terminus: Glutamate-1-semialdehyde 2,1-aminomutase (431 aa).

K269 is subject to N6-(pyridoxal phosphate)lysine.

This sequence belongs to the class-III pyridoxal-phosphate-dependent aminotransferase family. HemL subfamily. As to quaternary structure, homodimer. The cofactor is pyridoxal 5'-phosphate.

It is found in the cytoplasm. It carries out the reaction (S)-4-amino-5-oxopentanoate = 5-aminolevulinate. It participates in porphyrin-containing compound metabolism; protoporphyrin-IX biosynthesis; 5-aminolevulinate from L-glutamyl-tRNA(Glu): step 2/2. This is Glutamate-1-semialdehyde 2,1-aminomutase from Tolumonas auensis (strain DSM 9187 / NBRC 110442 / TA 4).